The chain runs to 199 residues: Holliday junction branch migration complex subunit RuvA (199 aa).

The domain I stretch occupies residues 1-65 (MIASLRGKLL…DRGQRLFGFG (65 aa)). The interval 66–144 (SKKDRESFEL…KFEMFLNEGT (79 aa)) is domain II. The tract at residues 145–155 (TESSFVDRETD) is flexible linker. The segment at 155–199 (DLATLALIQLGFDEKSATKQVADAKKLNPGLSASDIVKQVITGTR) is domain III.

The protein belongs to the RuvA family. Homotetramer. Forms an RuvA(8)-RuvB(12)-Holliday junction (HJ) complex. HJ DNA is sandwiched between 2 RuvA tetramers; dsDNA enters through RuvA and exits via RuvB. An RuvB hexamer assembles on each DNA strand where it exits the tetramer. Each RuvB hexamer is contacted by two RuvA subunits (via domain III) on 2 adjacent RuvB subunits; this complex drives branch migration. In the full resolvosome a probable DNA-RuvA(4)-RuvB(12)-RuvC(2) complex forms which resolves the HJ.

It localises to the cytoplasm. In terms of biological role, the RuvA-RuvB-RuvC complex processes Holliday junction (HJ) DNA during genetic recombination and DNA repair, while the RuvA-RuvB complex plays an important role in the rescue of blocked DNA replication forks via replication fork reversal (RFR). RuvA specifically binds to HJ cruciform DNA, conferring on it an open structure. The RuvB hexamer acts as an ATP-dependent pump, pulling dsDNA into and through the RuvAB complex. HJ branch migration allows RuvC to scan DNA until it finds its consensus sequence, where it cleaves and resolves the cruciform DNA. The protein is Holliday junction branch migration complex subunit RuvA of Leptospira biflexa serovar Patoc (strain Patoc 1 / Ames).